The sequence spans 423 residues: Large ribosomal subunit protein mL37 (423 aa).

Residues 1 to 29 (MALASGPALRALAGSGRLGLGGYGTPKRG) constitute a mitochondrion transit peptide.

The protein belongs to the mitochondrion-specific ribosomal protein mL37 family. As to quaternary structure, component of the mitochondrial ribosome large subunit (39S) which comprises a 16S rRNA and about 50 distinct proteins.

Its subcellular location is the mitochondrion. The polypeptide is Large ribosomal subunit protein mL37 (Mrpl37) (Mus musculus (Mouse)).